The sequence spans 338 residues: Putative peptide import ATP-binding protein BOV_A0348 (338 aa).

Residues 10 to 263 enclose the ABC transporter domain; it reads KGLRTVFRTR…PRHPYTMGLL (254 aa). 43–50 is an ATP binding site; sequence GESGSGKS.

It belongs to the ABC transporter superfamily. As to quaternary structure, the complex is composed of two ATP-binding proteins (BOV_A0347 and BOV_A0348), two transmembrane proteins (BOV_A0350 and BOV_A0351) and a solute-binding protein (BOV_A0352).

It localises to the cell inner membrane. Probably part of an ABC transporter complex that could be involved in peptide import. Probably responsible for energy coupling to the transport system. This chain is Putative peptide import ATP-binding protein BOV_A0348, found in Brucella ovis (strain ATCC 25840 / 63/290 / NCTC 10512).